Reading from the N-terminus, the 509-residue chain is Zinc finger protein Aiolos (509 aa).

The segment at 1-85 (MEDIKPNVEL…PMGNAEEPEI (85 aa)) is disordered. The segment covering 10–20 (LKSTQEQSVPT) has biased composition (polar residues). Thr-20 carries the post-translational modification Phosphothreonine. A compositionally biased stretch (basic and acidic residues) spans 56 to 72 (DSMKVKDEYSERDENVL). Glycyl lysine isopeptide (Lys-Gly) (interchain with G-Cter in SUMO2) cross-links involve residues Lys-61, Lys-73, and Lys-100. 3 consecutive C2H2-type zinc fingers follow at residues 118–140 (MNCDVCGLSCISFNVLMVHKRSH), 146–168 (FQCNQCGASFTQKGNLLRHIKLH), and 174–196 (FKCHLCNYACQRRDALTGHLRTH). The C2H2-type 4; atypical zinc finger occupies 202–224 (YKCEFCGRSYKQRSSLEEHKERC). Residue Lys-245 forms a Glycyl lysine isopeptide (Lys-Gly) (interchain with G-Cter in SUMO2) linkage. A Phosphothreonine modification is found at Thr-326. Residues 365 to 421 (HLPEKSLPSERGLSPTNSGHDSTDTDSNHEERQNHIYQQNPMVPPRARNGMPLLKEG) are disordered. Residue Ser-378 is modified to Phosphoserine. Residues 385 to 398 (DSTDTDSNHEERQN) show a composition bias toward basic and acidic residues. Residues 452 to 474 (YRCDHCRVLFLDYVMFTIHMGCH) form a C2H2-type 5 zinc finger. The interval 452–504 (YRCDHCRVLFLDYVMFTIHMGCHGFRDPFECNMCGYRSHDRYEFSSHIARGEH) is mediates homodimerization and heterodimerization. The C2H2-type 6; atypical zinc finger occupies 480–504 (FECNMCGYRSHDRYEFSSHIARGEH).

Belongs to the Ikaros C2H2-type zinc-finger protein family. In terms of assembly, homodimer. Heterodimer with other IKAROS family members. Interacts with IKZF4 and IKZF5. Interacts with IKZF1. Interacts with HRAS. Interacts with FOXP3; this interaction may be required for silencing target genes and regulating the suppressive activity of FOXP3-positive regulatory T-cells (Treg). Interacts with BCL21L; this interaction blocks the anti-apoptotic role of BCL21L. Associates with histone deacetylase complexes containing HDAC1, MTA2 and SIN3A.

It localises to the nucleus. Its subcellular location is the cytoplasm. In terms of biological role, transcription factor that plays an important role in the regulation of lymphocyte differentiation. Plays an essential role in regulation of B-cell differentiation, proliferation and maturation to an effector state. Involved in regulating BCL2 expression and controlling apoptosis in T-cells in an IL2-dependent manner. This Bos taurus (Bovine) protein is Zinc finger protein Aiolos (IKZF3).